The sequence spans 273 residues: Undecaprenyl-diphosphatase (273 aa).

7 helical membrane-spanning segments follow: residues 6–26 (SLLIAAILGVVEGLTEFLPVS), 45–65 (AKTFEVVIQLGSILAVVVMFW), 90–110 (LTLIHILLGMIPAVVLGLLFH), 116–136 (LFNPINVMYALVVGGLLLIAA), 190–210 (YAASEFSFLLAVPMMMGATAL), 222–242 (GDIPMFAVGFITAFVVALIAI), and 252–272 (ISFIPFAIYRFIVAAAVYVVF).

The protein belongs to the UppP family.

Its subcellular location is the cell inner membrane. The catalysed reaction is di-trans,octa-cis-undecaprenyl diphosphate + H2O = di-trans,octa-cis-undecaprenyl phosphate + phosphate + H(+). In terms of biological role, catalyzes the dephosphorylation of undecaprenyl diphosphate (UPP). Confers resistance to bacitracin. This Escherichia coli O157:H7 protein is Undecaprenyl-diphosphatase.